A 393-amino-acid polypeptide reads, in one-letter code: Formate-dependent phosphoribosylglycinamide formyltransferase (393 aa).

N(1)-(5-phospho-beta-D-ribosyl)glycinamide contacts are provided by residues 22–23 (EL) and E82. ATP is bound by residues R114, K155, 160–165 (SSGKGQ), 195–198 (EGFV), and E203. The 190-residue stretch at 119–308 (RLAAEELGLP…EFALHARAIL (190 aa)) folds into the ATP-grasp domain. Mg(2+) is bound by residues E267 and E279. N(1)-(5-phospho-beta-D-ribosyl)glycinamide-binding positions include D286, K356, and 363-364 (RR).

Belongs to the PurK/PurT family. As to quaternary structure, homodimer.

The catalysed reaction is N(1)-(5-phospho-beta-D-ribosyl)glycinamide + formate + ATP = N(2)-formyl-N(1)-(5-phospho-beta-D-ribosyl)glycinamide + ADP + phosphate + H(+). Its pathway is purine metabolism; IMP biosynthesis via de novo pathway; N(2)-formyl-N(1)-(5-phospho-D-ribosyl)glycinamide from N(1)-(5-phospho-D-ribosyl)glycinamide (formate route): step 1/1. In terms of biological role, involved in the de novo purine biosynthesis. Catalyzes the transfer of formate to 5-phospho-ribosyl-glycinamide (GAR), producing 5-phospho-ribosyl-N-formylglycinamide (FGAR). Formate is provided by PurU via hydrolysis of 10-formyl-tetrahydrofolate. This chain is Formate-dependent phosphoribosylglycinamide formyltransferase, found in Nitratidesulfovibrio vulgaris (strain DSM 19637 / Miyazaki F) (Desulfovibrio vulgaris).